Reading from the N-terminus, the 213-residue chain is Pyrrolidone-carboxylate peptidase (213 aa).

Active-site residues include Glu-78, Cys-141, and His-165.

It belongs to the peptidase C15 family. In terms of assembly, homotetramer.

Its subcellular location is the cytoplasm. The enzyme catalyses Release of an N-terminal pyroglutamyl group from a polypeptide, the second amino acid generally not being Pro.. Removes 5-oxoproline from various penultimate amino acid residues except L-proline. This chain is Pyrrolidone-carboxylate peptidase, found in Clostridium perfringens (strain SM101 / Type A).